The primary structure comprises 201 residues: MARYTGPATRKSRRLGVDLVGGDQSFEKRPYPPGQHGRARIKESEYRTQLQEKQKARFTYGVLEKQFRRYYDEANRQPGKTGDNLLRILESRLDNVVYRAGLARTRRMARQLVSHGHFTVNGVKVDIPSYRVSQYDIIDVREKSLNTDPFVIARETAGDRPIPSWLQVVGERQRILVHQLPERAQIDVPLTEQLIVELYSK.

A disordered region spans residues 1-38 (MARYTGPATRKSRRLGVDLVGGDQSFEKRPYPPGQHGR). Residues 91-157 (SRLDNVVYRA…DPFVIARETA (67 aa)) enclose the S4 RNA-binding domain.

Belongs to the universal ribosomal protein uS4 family. Part of the 30S ribosomal subunit. Contacts protein S5. The interaction surface between S4 and S5 is involved in control of translational fidelity.

In terms of biological role, one of the primary rRNA binding proteins, it binds directly to 16S rRNA where it nucleates assembly of the body of the 30S subunit. Functionally, with S5 and S12 plays an important role in translational accuracy. The sequence is that of Small ribosomal subunit protein uS4 from Mycobacterium sp. (strain JLS).